Here is a 581-residue protein sequence, read N- to C-terminus: Arginine--tRNA ligase (581 aa).

The short motif at 122–132 (PNVAKPMHVGH) is the 'HIGH' region element.

It belongs to the class-I aminoacyl-tRNA synthetase family. Monomer.

The protein localises to the cytoplasm. The enzyme catalyses tRNA(Arg) + L-arginine + ATP = L-arginyl-tRNA(Arg) + AMP + diphosphate. The polypeptide is Arginine--tRNA ligase (Francisella tularensis subsp. holarctica (strain FTNF002-00 / FTA)).